Reading from the N-terminus, the 89-residue chain is Otospiralin (89 aa).

The N-terminal stretch at 1–21 (MQACMVPGLALCLLLGPLAGA) is a signal peptide.

It belongs to the otospiralin family. In terms of tissue distribution, ear specific.

It localises to the secreted. Its function is as follows. May be essential for the survival of the neurosensory epithelium of the inner ear. The protein is Otospiralin (OTOS) of Homo sapiens (Human).